We begin with the raw amino-acid sequence, 421 residues long: Telomeric repeat-binding factor 1 (421 aa).

The tract at residues 1 to 30 (MAETVSSAARDAPSREGWTDSDSPEQEEVG) is disordered. Residue Ala2 is modified to N-acetylalanine. The interval 49 to 255 (ENAELVAEVE…AATKVVENEK (207 aa)) is TRFH mediates dimerization. A Glycyl lysine isopeptide (Lys-Gly) (interchain with G-Cter in SUMO2) cross-link involves residue Lys200. Ser206 carries the post-translational modification Phosphoserine; by ATM. Residues 252 to 365 (ENEKARTQAS…PDTDDKSGRR (114 aa)) are interaction with RLIM. A compositionally biased stretch (basic and acidic residues) spans 253-266 (NEKARTQASKDRPD). Residues 253 to 366 (NEKARTQASK…DTDDKSGRRK (114 aa)) are disordered. Positions 284–310 (VNGQQSTETEPLVDTVSSIRSHKNALS) are enriched in polar residues. Positions 313–367 (KHRRAPSDFSRNEARTGTLQCETTMERNRRTSGRNRLCVSENQPDTDDKSGRRKR) match the Nuclear localization signal motif. The region spanning 362–419 (SGRRKRQTWLWEEDRILKCGVKKYGEGNWAKILSHYKFNNRTSVMLKDRWRTMKRLKL) is the HTH myb-type domain. Residues 390-415 (WAKILSHYKFNNRTSVMLKDRWRTMK) constitute a DNA-binding region (H-T-H motif).

In terms of assembly, homodimer; can contain both isoforms. Found in a complex with POT1; TINF2 and TNKS1. Interacts with ATM, TINF2, TNKS1, TNKS2, PINX1, NEK2 and MAPRE1. Component of the shelterin complex (telosome) composed of TERF1, TERF2, TINF2, TERF2IP ACD and POT1. Interacts with RLIM (via N-terminus). Interacts with FBXO4. Interaction with TINF2 protects against interaction with FBXO4 and subsequent polyubiquitination and proteasomal degradation. Interacts with GNL3L; this interaction promotes homodimerization. Interacts with TIN2. Interactions with GNL3L and TIN2 are mutually exclusive. Interacts with RTEL1. Interacts with CCDC79/TERB1. In terms of processing, phosphorylated preferentially on Ser-219 in an ATM-dependent manner in response to ionizing DNA damage. Post-translationally, ADP-ribosylation by TNKS1 or TNKS2 diminishes its ability to bind to telomeric DNA. Ubiquitinated by RLIM/RNF12, leading to its degradation by the proteasome. Ubiquitinated by a SCF (SKP1-CUL1-F-box protein) ubiquitin-protein ligase complex, leading to its degradation by the proteasome.

The protein resides in the nucleus. It is found in the chromosome. The protein localises to the telomere. It localises to the cytoplasm. Its subcellular location is the cytoskeleton. The protein resides in the spindle. Binds the telomeric double-stranded 5'-TTAGGG-3' repeat and negatively regulates telomere length. Involved in the regulation of the mitotic spindle. Component of the shelterin complex (telosome) that is involved in the regulation of telomere length and protection. Shelterin associates with arrays of double-stranded 5'-TTAGGG-3' repeats added by telomerase and protects chromosome ends; without its protective activity, telomeres are no longer hidden from the DNA damage surveillance and chromosome ends are inappropriately processed by DNA repair pathways. This chain is Telomeric repeat-binding factor 1 (Terf1), found in Mus musculus (Mouse).